The sequence spans 59 residues: UPF0339 protein CC_2965 (59 aa).

This sequence belongs to the UPF0339 family.

This is UPF0339 protein CC_2965 from Caulobacter vibrioides (strain ATCC 19089 / CIP 103742 / CB 15) (Caulobacter crescentus).